The following is a 451-amino-acid chain: POU domain, class 3, transcription factor 1 (451 aa).

Disordered regions lie at residues 1–21 (MATT…GTGP), 69–114 (AHPQ…GFHA), 134–154 (AHHL…HQPQ), 186–253 (GLHH…PSSD), and 395–451 (KRMT…GSVQ). Gly residues-rich tracts occupy residues 11-20 (GPGGGAGGTG), 76-85 (TGGGGGGDWA), and 95-112 (AGGG…GGGF). The segment covering 134–145 (AHHLGPAMSPSP) has biased composition (low complexity). A compositionally biased stretch (basic and acidic residues) spans 190–199 (ALHEDGHEAQ). Positions 220-232 (AGGLHAAAAHLHP) are enriched in low complexity. The POU-specific domain occupies 247–321 (EDAPSSDDLE…LLNKWLEETD (75 aa)). The homeobox DNA-binding region spans 339 to 398 (KRKKRTSIEVGVKGALESHFLKCPKPSAHEITGLADSLQLEKEVVRVWFCNRRQKEKRMT). The segment covering 427-436 (PSAPPPPPPA) has biased composition (pro residues).

This sequence belongs to the POU transcription factor family. Class-3 subfamily. In terms of tissue distribution, neural tissues and testis.

The protein resides in the nucleus. Transcription factor that binds to the octamer motif (5'-ATTTGCAT-3'). Acts as a transcriptional activator when binding cooperatively with SOX4, SOX11, or SOX12 to gene promoters. Acts as a transcriptional repressor of myelin-specific genes. The protein is POU domain, class 3, transcription factor 1 (Pou3f1) of Rattus norvegicus (Rat).